The primary structure comprises 92 residues: PqqA binding protein (92 aa).

This sequence belongs to the PqqD family. As to quaternary structure, monomer. Interacts with PqqE.

It functions in the pathway cofactor biosynthesis; pyrroloquinoline quinone biosynthesis. Its function is as follows. Functions as a PqqA binding protein and presents PqqA to PqqE, in the pyrroloquinoline quinone (PQQ) biosynthetic pathway. The polypeptide is PqqA binding protein (Pseudomonas paraeruginosa (strain DSM 24068 / PA7) (Pseudomonas aeruginosa (strain PA7))).